Consider the following 426-residue polypeptide: Ankyrin repeat-containing protein BDA1 (426 aa).

6 ANK repeats span residues 1-29 (MDSK…DILQ), 36-65 (IIHT…SFAK), 70-99 (YGLS…SLVR), 104-134 (GGMT…SIKD), 138-167 (NGET…KMRD), and 182-212 (GGNT…DRNI). The next 4 helical transmembrane spans lie at 288-308 (ALLV…AQLL), 329-349 (WGCN…LLPV), 355-375 (WWYF…MYMM), and 380-400 (FFFL…VLYV).

It is found in the cell membrane. Involved in plant defense. Required for basal resistance against Pseudomonas syringae pv. tomato DC3000. Required for resistance against nonpathogenic bacteria. May be involved in signaling components that function downstream of SNC2 and upstream of NPR1 and WRKY70 to regulate defense responses. The chain is Ankyrin repeat-containing protein BDA1 from Arabidopsis thaliana (Mouse-ear cress).